We begin with the raw amino-acid sequence, 253 residues long: MHYLKKVTIYISLLILVSGCGDSKETEIKQNFNKMLNVYPTKNLEDFYDKEGYRDEEFDKDDKGTWIIRSEMTKQPKGKIMTSKGMVLHMNRNTRSTTGYYVIRKISEDNKSEIDDEEKKYPIKMVNNKIIPTQKINDNKLKNEIENFKFFVQYGSFKNSDDYKEGDIEYNPNAPNYSAQYHLSNDDYNIKQLRKRYDIKTKKTPRLLMRGAGDPKGSSVGYKNLEFTFVKNNEENIYFTDSINFNPSKGKSL.

The N-terminal stretch at 1–19 (MHYLKKVTIYISLLILVSG) is a signal peptide. Cysteine 20 is lipidated: N-palmitoyl cysteine. Residue cysteine 20 is the site of S-diacylglycerol cysteine attachment.

Belongs to the staphylococcal tandem lipoprotein family.

Its subcellular location is the cell membrane. This is an uncharacterized protein from Staphylococcus epidermidis (strain ATCC 35984 / DSM 28319 / BCRC 17069 / CCUG 31568 / BM 3577 / RP62A).